Consider the following 682-residue polypeptide: MKPSHFTEKRFMKKVLGLFLVVVMLASVGVLPTSKVQAAGTTVTSMEYFSPADGPVISKSGVGKASYGFVMPKFNGGSATWNDVYSDVGVNVKVGNNWVDIDQAGGYIYNQNWGHWSDGGFNGYWFTLSATTEIQLYSKANGVKLEYQLVFQNINKTTITAMNPTQGPQITASFTGGAGFTYPTFNNDSAVTYEAVADDLKVYVKPVNSSSWIDIDNNAASGWIYDHNFGQFTDGGGGYWFNVTESINVKLESKTSSANLVYTITFNEPTRNSYVITPYEGTTFTADANGSIGIPLPKIDGGAPIAKELGNFVYQININGQWVDLSNSSQSKFAYSANGYNNMSDANQWGYWADYIYGLWFQPIQENMQIRIGYPLNGQAGGNIGNNFVNYTFIGNPNAPRPDVSDQEDISIGTPTDPAIAGMNLIWQDEFNGTTLDTSKWNYETGYYLNNDPATWGWGNAELQHYTNSTQNVYVQDGKLNIKAMNDSKSFPQDPNRYAQYSSGKINTKDKLSLKYGRVDFRAKLPTGDGVWPALWMLPKDSVYGTWAASGEIDVMEARGRLPGSVSGTIHFGGQWPVNQSSGGDYHFPEGQTFANDYHVYSVVWEEDNIKWYVDGKFFYKVTNQQWYSTAAPNNPNAPFDEPFYLIMNLAVGGNFDGGRTPNASDIPATMQVDYVRVYKEQ.

A signal peptide spans 1 to 38; the sequence is MKPSHFTEKRFMKKVLGLFLVVVMLASVGVLPTSKVQA. The GH16 domain occupies 391 to 682; that stretch reads YTFIGNPNAP…VDYVRVYKEQ (292 aa). Glu552 serves as the catalytic Nucleophile. Glu557 functions as the Proton donor in the catalytic mechanism.

It belongs to the glycosyl hydrolase 16 family.

It is found in the secreted. It catalyses the reaction Hydrolysis of (1-&gt;3)-beta-D-glucosidic linkages in (1-&gt;3)-beta-D-glucans.. Its function is as follows. Lysis of cellular walls containing beta-1,3-glucans. Implicated in the defense against fungal pathogens. The polypeptide is Glucan endo-1,3-beta-glucosidase A1 (glcA) (Niallia circulans (Bacillus circulans)).